We begin with the raw amino-acid sequence, 304 residues long: Acetyl-coenzyme A carboxylase carboxyl transferase subunit beta (304 aa).

The region spanning 25-294 (VWTKCDSCGQ…PSVVESKADT (270 aa)) is the CoA carboxyltransferase N-terminal domain. The Zn(2+) site is built by C29, C32, C48, and C51. The segment at 29 to 51 (CDSCGQVLYRAELERNLEVCPKC) adopts a C4-type zinc-finger fold.

It belongs to the AccD/PCCB family. As to quaternary structure, acetyl-CoA carboxylase is a heterohexamer composed of biotin carboxyl carrier protein (AccB), biotin carboxylase (AccC) and two subunits each of ACCase subunit alpha (AccA) and ACCase subunit beta (AccD). The cofactor is Zn(2+).

The protein localises to the cytoplasm. It catalyses the reaction N(6)-carboxybiotinyl-L-lysyl-[protein] + acetyl-CoA = N(6)-biotinyl-L-lysyl-[protein] + malonyl-CoA. The protein operates within lipid metabolism; malonyl-CoA biosynthesis; malonyl-CoA from acetyl-CoA: step 1/1. In terms of biological role, component of the acetyl coenzyme A carboxylase (ACC) complex. Biotin carboxylase (BC) catalyzes the carboxylation of biotin on its carrier protein (BCCP) and then the CO(2) group is transferred by the transcarboxylase to acetyl-CoA to form malonyl-CoA. The chain is Acetyl-coenzyme A carboxylase carboxyl transferase subunit beta from Yersinia pestis (strain Pestoides F).